A 227-amino-acid chain; its full sequence is Enolase-phosphatase E1 (227 aa).

Mg(2+) is bound by residues aspartate 11 and glutamate 13. Residues 118-119 (SS) and lysine 161 contribute to the substrate site. Aspartate 186 lines the Mg(2+) pocket.

The protein belongs to the HAD-like hydrolase superfamily. MasA/MtnC family. As to quaternary structure, monomer. Mg(2+) is required as a cofactor.

The protein resides in the cytoplasm. Its subcellular location is the nucleus. The catalysed reaction is 5-methylsulfanyl-2,3-dioxopentyl phosphate + H2O = 1,2-dihydroxy-5-(methylsulfanyl)pent-1-en-3-one + phosphate. Its pathway is amino-acid biosynthesis; L-methionine biosynthesis via salvage pathway; L-methionine from S-methyl-5-thio-alpha-D-ribose 1-phosphate: step 3/6. The protein operates within amino-acid biosynthesis; L-methionine biosynthesis via salvage pathway; L-methionine from S-methyl-5-thio-alpha-D-ribose 1-phosphate: step 4/6. Its function is as follows. Bifunctional enzyme that catalyzes the enolization of 2,3-diketo-5-methylthiopentyl-1-phosphate (DK-MTP-1-P) into the intermediate 2-hydroxy-3-keto-5-methylthiopentenyl-1-phosphate (HK-MTPenyl-1-P), which is then dephosphorylated to form the acireductone 1,2-dihydroxy-3-keto-5-methylthiopentene (DHK-MTPene). This Saccharomyces cerevisiae (strain JAY291) (Baker's yeast) protein is Enolase-phosphatase E1.